The chain runs to 190 residues: Elongation factor P-like protein (190 aa).

This sequence belongs to the elongation factor P family.

The protein is Elongation factor P-like protein of Psychromonas ingrahamii (strain DSM 17664 / CCUG 51855 / 37).